Here is a 1431-residue protein sequence, read N- to C-terminus: Stabilin-2 (1431 aa).

Topologically, residues 1 to 1322 (SLPSLLTRLE…PPTAATAAHS (1322 aa)) are extracellular. An FAS1 domain is found at 2–130 (LPSLLTRLEQ…GVIHGLEKVL (129 aa)). Residues Asn-112 and Asn-140 are each glycosylated (N-linked (GlcNAc...) asparagine). Residues 207 to 272 (PQCQACPGRG…CSCVHGRCSQ (66 aa)) form the Laminin EGF-like 1 domain. 18 disulfide bridges follow: Cys-212/Cys-226, Cys-220/Cys-236, Cys-238/Cys-247, Cys-259/Cys-270, Cys-263/Cys-280, Cys-282/Cys-291, Cys-300/Cys-310, Cys-304/Cys-320, Cys-322/Cys-333, Cys-339/Cys-352, Cys-346/Cys-362, Cys-364/Cys-375, Cys-381/Cys-394, Cys-388/Cys-404, Cys-406/Cys-417, Cys-423/Cys-436, Cys-430/Cys-446, and Cys-448/Cys-459. Asn-231 and Asn-243 each carry an N-linked (GlcNAc...) asparagine glycan. EGF-like domains follow at residues 296 to 334 (TTDN…TVCT), 335 to 376 (AINA…IVCL), 377 to 418 (EINP…KVCS), and 419 to 460 (LINV…IVCR). N-linked (GlcNAc...) asparagine glycosylation occurs at Asn-301. Residue Asn-329 is glycosylated (N-linked (GlcNAc...) asparagine). Residue Asn-437 is glycosylated (N-linked (GlcNAc...) asparagine). 2 FAS1 domains span residues 460-588 (RGSI…DKLL) and 604-745 (VLQN…DCLL). N-linked (GlcNAc...) asparagine glycosylation occurs at Asn-607. A Laminin EGF-like 2 domain is found at 822–887 (PDCQACPGGP…SCSEHGQCDE (66 aa)). Cystine bridges form between Cys-827-Cys-841, Cys-835-Cys-851, Cys-853-Cys-862, Cys-874-Cys-885, Cys-879-Cys-895, and Cys-897-Cys-906. Asn-858 is a glycosylation site (N-linked (GlcNAc...) asparagine). N-linked (GlcNAc...) asparagine glycosylation is present at Asn-929. EGF-like domains follow at residues 947–987 (VVDF…YSCI) and 988–1030 (EIDP…VDCE). Intrachain disulfides connect Cys-951-Cys-964, Cys-958-Cys-973, Cys-975-Cys-986, Cys-992-Cys-1006, Cys-1000-Cys-1016, Cys-1018-Cys-1029, Cys-1085-Cys-1154, and Cys-1109-Cys-1130. One can recognise a Link domain in the interval 1063–1156 (GVFHLRSPLG…SEMWDVFCYR (94 aa)). N-linked (GlcNAc...) asparagine glycans are attached at residues Asn-1145, Asn-1161, Asn-1233, Asn-1249, and Asn-1258. The region spanning 1176–1310 (SGNLLQVLMS…GILHIISEPL (135 aa)) is the FAS1 4 domain. Residues 1323–1343 (GLGTGIFCAVVLVTGAIALAA) form a helical membrane-spanning segment. Residues 1344–1431 (YSYFRLKQRT…QQATTVTVPR (88 aa)) are Cytoplasmic-facing. Positions 1368 to 1378 (WLLASSSPRIS) are interaction with TMSB4X.

As to quaternary structure, interacts with GULP1, heparin, alpha-M/beta-2 integrin (ITGAM and ITGB2), and thymosin beta 4 (TMSB4X). In terms of processing, glycosylated. Post-translationally, proteolytically processed to yield a 175 kDa protein. Initially expressed in all vascular cells, including those of sinusoidal-like structures, vitellin veins, and hepatic veins or sinus venosus, in E13.5 fetal liver. The expression then progressively disappears in the portal and hepatic veins, but the expression in sinusoidals endothelial cells (SECs) is retained and becomes stronger during development.

Its subcellular location is the cytoplasm. The protein localises to the cell membrane. In terms of biological role, phosphatidylserine receptor that enhances the engulfment of apoptotic cells. Hyaluronan receptor that binds to and mediates endocytosis of hyaluronic acid (HA). Also acts, in different species, as a primary systemic scavenger receptor for heparin (Hep), chondroitin sulfate (CS), dermatan sulfate (DS), nonglycosaminoglycan (GAG), acetylated low-density lipoprotein (AcLDL), pro-collagen propeptides and advanced glycation end products (AGE). May serve to maintain tissue integrity by supporting extracellular matrix turnover or it may contribute to maintaining fluidity of bodily liquids by resorption of hyaluronan. Counter receptor which plays an important role in lymphocyte recruitment in the hepatic vasculature. Binds to both Gram-positive and Gram-negative bacteria and may play a role in defense against bacterial infection. The proteolytically processed 175 kDa form also functions as an endocytosis receptor for heparin internalization as well as HA and CS. In Rattus norvegicus (Rat), this protein is Stabilin-2.